The sequence spans 258 residues: Tryptophan synthase alpha chain (258 aa).

Residues Glu47 and Asp58 each act as proton acceptor in the active site.

The protein belongs to the TrpA family. In terms of assembly, tetramer of two alpha and two beta chains.

It catalyses the reaction (1S,2R)-1-C-(indol-3-yl)glycerol 3-phosphate + L-serine = D-glyceraldehyde 3-phosphate + L-tryptophan + H2O. It functions in the pathway amino-acid biosynthesis; L-tryptophan biosynthesis; L-tryptophan from chorismate: step 5/5. Functionally, the alpha subunit is responsible for the aldol cleavage of indoleglycerol phosphate to indole and glyceraldehyde 3-phosphate. The polypeptide is Tryptophan synthase alpha chain (Bacillus anthracis (strain CDC 684 / NRRL 3495)).